The primary structure comprises 254 residues: Probable protein S-acyltransferase 15 (254 aa).

Transmembrane regions (helical) follow at residues 1–21 and 28–48; these read MGFV…GLQS and ALLF…CVLV. Positions 75–125 constitute a DHHC domain; sequence RKCDKCFAYKPLRTHHCRVCRRCVLKMDHHCLWINNCVGYANYKAFFILVF. The active-site S-palmitoyl cysteine intermediate is the cysteine 105. 2 helical membrane passes run 119-139 and 164-184; these read AFFI…VLLV and IFMI…IYLI.

This sequence belongs to the DHHC palmitoyltransferase family.

It is found in the endoplasmic reticulum membrane. Its subcellular location is the cytoplasmic vesicle membrane. The catalysed reaction is L-cysteinyl-[protein] + hexadecanoyl-CoA = S-hexadecanoyl-L-cysteinyl-[protein] + CoA. In terms of biological role, palmitoyl acyltransferase. The sequence is that of Probable protein S-acyltransferase 15 (PAT15) from Arabidopsis thaliana (Mouse-ear cress).